We begin with the raw amino-acid sequence, 547 residues long: Chaperonin GroEL 1 (547 aa).

ATP is bound by residues 30–33, Lys-51, 87–91, Gly-415, and Asp-496; these read TLGP and DGTTT.

This sequence belongs to the chaperonin (HSP60) family. As to quaternary structure, forms a cylinder of 14 subunits composed of two heptameric rings stacked back-to-back. Interacts with the co-chaperonin GroES.

It is found in the cytoplasm. It catalyses the reaction ATP + H2O + a folded polypeptide = ADP + phosphate + an unfolded polypeptide.. Functionally, together with its co-chaperonin GroES, plays an essential role in assisting protein folding. The GroEL-GroES system forms a nano-cage that allows encapsulation of the non-native substrate proteins and provides a physical environment optimized to promote and accelerate protein folding. The sequence is that of Chaperonin GroEL 1 from Bradyrhizobium sp. (strain BTAi1 / ATCC BAA-1182).